The sequence spans 314 residues: DNA-directed RNA polymerase subunit alpha (314 aa).

Residues 1-228 form an alpha N-terminal domain (alpha-NTD) region; sequence MIEIEKPKIE…EHLNIFVGLT (228 aa). The tract at residues 246 to 314 is alpha C-terminal domain (alpha-CTD); the sequence is EKVLEMTIEE…ELGLGLRKDD (69 aa).

This sequence belongs to the RNA polymerase alpha chain family. As to quaternary structure, homodimer. The RNAP catalytic core consists of 2 alpha, 1 beta, 1 beta' and 1 omega subunit. When a sigma factor is associated with the core the holoenzyme is formed, which can initiate transcription.

It carries out the reaction RNA(n) + a ribonucleoside 5'-triphosphate = RNA(n+1) + diphosphate. DNA-dependent RNA polymerase catalyzes the transcription of DNA into RNA using the four ribonucleoside triphosphates as substrates. In Bacillus velezensis (strain DSM 23117 / BGSC 10A6 / LMG 26770 / FZB42) (Bacillus amyloliquefaciens subsp. plantarum), this protein is DNA-directed RNA polymerase subunit alpha.